A 336-amino-acid polypeptide reads, in one-letter code: GTPase Obg (336 aa).

An Obg domain is found at Met-1–Ile-159. The OBG-type G domain maps to Ala-160 to Thr-328. GTP contacts are provided by residues Gly-166–Ser-173, Phe-191–His-195, Asp-213–Gly-216, Asn-280–Asp-283, and Ser-309–Ala-311. Residues Ser-173 and Thr-193 each contribute to the Mg(2+) site.

It belongs to the TRAFAC class OBG-HflX-like GTPase superfamily. OBG GTPase family. Monomer. Mg(2+) is required as a cofactor.

The protein localises to the cytoplasm. In terms of biological role, an essential GTPase which binds GTP, GDP and possibly (p)ppGpp with moderate affinity, with high nucleotide exchange rates and a fairly low GTP hydrolysis rate. Plays a role in control of the cell cycle, stress response, ribosome biogenesis and in those bacteria that undergo differentiation, in morphogenesis control. This chain is GTPase Obg, found in Gluconobacter oxydans (strain 621H) (Gluconobacter suboxydans).